The sequence spans 430 residues: Histidine--tRNA ligase (430 aa).

The protein belongs to the class-II aminoacyl-tRNA synthetase family. In terms of assembly, homodimer.

It localises to the cytoplasm. It catalyses the reaction tRNA(His) + L-histidine + ATP = L-histidyl-tRNA(His) + AMP + diphosphate + H(+). This Parasynechococcus marenigrum (strain WH8102) protein is Histidine--tRNA ligase.